Reading from the N-terminus, the 164-residue chain is Protein-export protein SecB (164 aa).

This sequence belongs to the SecB family. Homotetramer, a dimer of dimers. One homotetramer interacts with 1 SecA dimer.

The protein localises to the cytoplasm. Its function is as follows. One of the proteins required for the normal export of preproteins out of the cell cytoplasm. It is a molecular chaperone that binds to a subset of precursor proteins, maintaining them in a translocation-competent state. It also specifically binds to its receptor SecA. The sequence is that of Protein-export protein SecB from Burkholderia orbicola (strain MC0-3).